The sequence spans 158 residues: NADH-quinone oxidoreductase subunit B (158 aa).

Cysteine 37, cysteine 38, cysteine 102, and cysteine 132 together coordinate [4Fe-4S] cluster.

Belongs to the complex I 20 kDa subunit family. As to quaternary structure, NDH-1 is composed of 14 different subunits. Subunits NuoB, C, D, E, F, and G constitute the peripheral sector of the complex. The cofactor is [4Fe-4S] cluster.

Its subcellular location is the cell inner membrane. The enzyme catalyses a quinone + NADH + 5 H(+)(in) = a quinol + NAD(+) + 4 H(+)(out). Its function is as follows. NDH-1 shuttles electrons from NADH, via FMN and iron-sulfur (Fe-S) centers, to quinones in the respiratory chain. Couples the redox reaction to proton translocation (for every two electrons transferred, four hydrogen ions are translocated across the cytoplasmic membrane), and thus conserves the redox energy in a proton gradient. This Dechloromonas aromatica (strain RCB) protein is NADH-quinone oxidoreductase subunit B.